Reading from the N-terminus, the 232-residue chain is 5'-methylthioadenosine/S-adenosylhomocysteine nucleosidase (232 aa).

The active-site Proton acceptor is Glu-14. Substrate-binding positions include Gly-80, Val-154, and 175–176 (ME). Catalysis depends on Asp-199, which acts as the Proton donor.

This sequence belongs to the PNP/UDP phosphorylase family. MtnN subfamily.

The enzyme catalyses S-adenosyl-L-homocysteine + H2O = S-(5-deoxy-D-ribos-5-yl)-L-homocysteine + adenine. It catalyses the reaction S-methyl-5'-thioadenosine + H2O = 5-(methylsulfanyl)-D-ribose + adenine. The catalysed reaction is 5'-deoxyadenosine + H2O = 5-deoxy-D-ribose + adenine. It participates in amino-acid biosynthesis; L-methionine biosynthesis via salvage pathway; S-methyl-5-thio-alpha-D-ribose 1-phosphate from S-methyl-5'-thioadenosine (hydrolase route): step 1/2. Its function is as follows. Catalyzes the irreversible cleavage of the glycosidic bond in both 5'-methylthioadenosine (MTA) and S-adenosylhomocysteine (SAH/AdoHcy) to adenine and the corresponding thioribose, 5'-methylthioribose and S-ribosylhomocysteine, respectively. Also cleaves 5'-deoxyadenosine, a toxic by-product of radical S-adenosylmethionine (SAM) enzymes, into 5-deoxyribose and adenine. The sequence is that of 5'-methylthioadenosine/S-adenosylhomocysteine nucleosidase from Actinobacillus pleuropneumoniae serotype 3 (strain JL03).